Reading from the N-terminus, the 571-residue chain is Urease subunit alpha (571 aa).

The Urease domain occupies 133–571; sequence GGIDTHIHFV…LPLAQRYFLF (439 aa). Ni(2+) is bound by residues histidine 138, histidine 140, and lysine 221. Lysine 221 bears the N6-carboxylysine mark. A substrate-binding site is contributed by histidine 223. Ni(2+)-binding residues include histidine 250 and histidine 276. The active-site Proton donor is the histidine 324. Aspartate 364 lines the Ni(2+) pocket.

It belongs to the metallo-dependent hydrolases superfamily. Urease alpha subunit family. As to quaternary structure, heterotrimer of UreA (gamma), UreB (beta) and UreC (alpha) subunits. Three heterotrimers associate to form the active enzyme. Ni cation serves as cofactor. In terms of processing, carboxylation allows a single lysine to coordinate two nickel ions.

The protein resides in the cytoplasm. The enzyme catalyses urea + 2 H2O + H(+) = hydrogencarbonate + 2 NH4(+). It functions in the pathway nitrogen metabolism; urea degradation; CO(2) and NH(3) from urea (urease route): step 1/1. This chain is Urease subunit alpha, found in Anaeromyxobacter sp. (strain K).